We begin with the raw amino-acid sequence, 446 residues long: Sensor-type histidine kinase PrrB (446 aa).

2 helical membrane passes run 19–39 (VVAT…VVWV) and 151–171 (LLIC…LAAF). In terms of domain architecture, HAMP spans 172-222 (AVRPFKQLAQQTRSVDAGGEAPRVEVHGATEAVEIAEAMRGMLQRIWNEQN). The region spanning 237–446 (VSSHELRTPL…RLLLRISAPS (210 aa)) is the Histidine kinase domain. His240 is modified (phosphohistidine; by autocatalysis).

Post-translationally, autophosphorylated.

The protein localises to the cell membrane. The catalysed reaction is ATP + protein L-histidine = ADP + protein N-phospho-L-histidine.. Member of the two-component regulatory system PrrB/PrrA that is involved specifically in early intracellular multiplication of Mycobacterium and is essential for its viability. Functions as a sensor protein kinase which is autophosphorylated at a histidine residue and transfers its phosphate group to the conserved aspartic acid residue in the regulatory domain of PrrA. In turn, PrrA binds to the upstream promoter regions of target genes including itself to positively regulate their expression. This Mycobacterium leprae (strain TN) protein is Sensor-type histidine kinase PrrB (prrB).